Consider the following 137-residue polypeptide: Transcription antitermination protein NusB (137 aa).

This sequence belongs to the NusB family.

In terms of biological role, involved in transcription antitermination. Required for transcription of ribosomal RNA (rRNA) genes. Binds specifically to the boxA antiterminator sequence of the ribosomal RNA (rrn) operons. The chain is Transcription antitermination protein NusB from Aeromonas hydrophila subsp. hydrophila (strain ATCC 7966 / DSM 30187 / BCRC 13018 / CCUG 14551 / JCM 1027 / KCTC 2358 / NCIMB 9240 / NCTC 8049).